A 160-amino-acid chain; its full sequence is Putative pre-16S rRNA nuclease (160 aa).

It belongs to the YqgF nuclease family.

Its subcellular location is the cytoplasm. Could be a nuclease involved in processing of the 5'-end of pre-16S rRNA. In Rhodopseudomonas palustris (strain HaA2), this protein is Putative pre-16S rRNA nuclease.